The sequence spans 79 residues: UPF0401 protein YkfF (79 aa).

It belongs to the UPF0401 family.

The polypeptide is UPF0401 protein YkfF (ykfF) (Escherichia coli (strain K12)).